Here is a 495-residue protein sequence, read N- to C-terminus: OTU domain-containing protein CG3251 (495 aa).

Residues 29 to 150 (LFRKHMLGDA…MGHFETVLTM (122 aa)) form the OTU domain. A Tudor domain is found at 302–364 (NFKVGAKCQV…HPLPPDEFKA (63 aa)). The span at 375-389 (LHNSQMGRQSVQGDQ) shows a compositional bias: polar residues. The disordered stretch occupies residues 375-404 (LHNSQMGRQSVQGDQQGFVPDPMPGTAPSM). Pro residues predominate over residues 395–404 (DPMPGTAPSM).

In terms of biological role, putative OTU-type deubiquitinase. Catalytically inactive towards all diubiquitin molecules and long K48- and K63- linked ubiquitin chains in vitro. Potential modulator of apoptosis. The protein is OTU domain-containing protein CG3251 of Drosophila melanogaster (Fruit fly).